The sequence spans 444 residues: MKAVEANFDGLVGPTHNYSGLSVGNIASKNNKAGASNPKQAVKQGLEKMKALHDMGFVQGVLAPQERPDIATLRRLGFSGSDANVLQQSHQYSPQLLAACSSASSMWTANAATVSPSSDTADGKVHFTPANLINKFHRSIEDEVTGNILKATFADEKHFSHHEALPHSDYFGDEGAANHTRFCNEYGEQGVEFFVFGKSAFNDRYPAPKKYPARQTLEASEAIARTHGLRDKFTVFAQQNPDVIDQGVFHNDVIAVGNKNTLFCHQQAFLNQEQVKSDLSASYGSGFNVIEVPTDKVSLQDAVETYLFNSQLVTKSDGKTLIILPQHCRENPRVWAYLNELVEQKRGIDELHTFDLKQSMQNGGGPACLRLRVVLNEAEQQAVNQQTLMNDMLFSTLNAWADKHYRDRIEDKDLADPQLLLESRAALDELTQIMKLGSVYPFQR.

Substrate is bound by residues 19–28 (SGLSVGNIAS), asparagine 110, and 137–138 (HR). Residue glutamate 174 is part of the active site. Substrate is bound at residue arginine 214. Histidine 250 is an active-site residue. The substrate site is built by aspartate 252 and asparagine 362. The active-site Nucleophile is the cysteine 368.

It belongs to the succinylarginine dihydrolase family. Homodimer.

It carries out the reaction N(2)-succinyl-L-arginine + 2 H2O + 2 H(+) = N(2)-succinyl-L-ornithine + 2 NH4(+) + CO2. It functions in the pathway amino-acid degradation; L-arginine degradation via AST pathway; L-glutamate and succinate from L-arginine: step 2/5. Its function is as follows. Catalyzes the hydrolysis of N(2)-succinylarginine into N(2)-succinylornithine, ammonia and CO(2). This is N-succinylarginine dihydrolase from Aliivibrio salmonicida (strain LFI1238) (Vibrio salmonicida (strain LFI1238)).